A 685-amino-acid polypeptide reads, in one-letter code: MSSFSQVRNPITGQATWQENADDYDYHQEVANAGFGDMLHDWERNQKYYAAIKKTIKRMQADGREVHVLDIGTGTGILSMMALKAGADSVTACEAFLPMANCAAKIMTANGADKIQLIRKRSTEIQIGVDMARRANLLVAELLDTELIGEGAIGIYNHAHQELLTKDALCIPARARCYAQVATSSLAKQWNGFKLMANLDGETLLRVPPQLNECKGDAALHDLQLSQLPTESFRLFSKPVEIFEFDFQQHLEPIQKQRNKVVPLQASQPGSADMVFYWWDIDLDHESEIVLSCAPFWAHPDKDKHVAGEDKPLANAIPWRDHWMQAIYYIPKPLHLSNTKETFYLSCHHDEYSLWFDAQLKEPAESIERHHCTCDLHLINPRSRIGQLNQSPRNKRYLNYLEETTTKDSQFLVLGNSCFLGLATCGLGAASVEIYDSNSLSRRLLDSFIKFNKLENVSLLEKLEDVQDHSKLTHIFAEPYFINSILPWDNFYFGTLLLSLKDKLSEGTQISPCAARIFALPMEFLDLHKIRAPVGNCEGFDLSLFDEMVKDSADKAVSSVEAQPLWEYPGRALAQPQEILRVDFANFNQELHQQGSIELIRSKECNGIALWVDWQLYSSESPKAFVTSGPSQPIEIGKFVKWDMFVRQGVHFPQTRTTNATQVEWQIDFKPFLGELNFKFDLKSI.

SAM-dependent MTase PRMT-type domains are found at residues 14–355 (QATW…YSLW) and 364–685 (AESI…LKSI).

Belongs to the class I-like SAM-binding methyltransferase superfamily. Protein arginine N-methyltransferase family. PRMT7 subfamily.

Functionally, essential arginine methyltransferase that can both catalyze the formation of omega-N monomethylarginine (MMA) and symmetrical dimethylarginine (sDMA). Specifically mediates the symmetrical dimethylation of arginine residues in the small nuclear ribonucleoproteins SmD1 and SmD3. This chain is Protein arginine N-methyltransferase 7 (Art7), found in Drosophila willistoni (Fruit fly).